The following is a 118-amino-acid chain: Actin depolymerizing factor ADF (118 aa).

The ADF-H domain occupies 4–118; it reads GMGVDENCVA…HEMGDLAPLA (115 aa).

The protein belongs to the actin-binding proteins ADF family. As to quaternary structure, interacts with ACT1 (G-actin); the interaction results in inhibition of actin polymerization. Interacts with DPA; the interaction enhances ADF activity in disassembly of filamentous actin and inhibition of actin polymerization.

The protein localises to the cytoplasm. Functionally, inhibits actin polymerization. Promotes actin depolymerization. Strongly sequesters actin monomers (G-actin). Weakly severs actin filaments (F-actin). The protein is Actin depolymerizing factor ADF of Toxoplasma gondii.